Consider the following 317-residue polypeptide: Homoserine O-acetyltransferase (317 aa).

Cysteine 142 serves as the catalytic Acyl-thioester intermediate. Lysine 163 and serine 192 together coordinate substrate. Histidine 235 functions as the Proton acceptor in the catalytic mechanism. Glutamate 237 is an active-site residue. Arginine 249 is a binding site for substrate.

The protein belongs to the MetA family.

It localises to the cytoplasm. The enzyme catalyses L-homoserine + acetyl-CoA = O-acetyl-L-homoserine + CoA. It functions in the pathway amino-acid biosynthesis; L-methionine biosynthesis via de novo pathway; O-acetyl-L-homoserine from L-homoserine: step 1/1. Functionally, transfers an acetyl group from acetyl-CoA to L-homoserine, forming acetyl-L-homoserine. This is Homoserine O-acetyltransferase from Rhizorhabdus wittichii (strain DSM 6014 / CCUG 31198 / JCM 15750 / NBRC 105917 / EY 4224 / RW1) (Sphingomonas wittichii).